The sequence spans 314 residues: Short chain dehydrogenase atnD (314 aa).

NADP(+) is bound by residues leucine 41, lysine 66, aspartate 90, and asparagine 116. Active-site proton donor residues include serine 171 and tyrosine 204. NADP(+)-binding residues include tyrosine 204 and lysine 208. The active-site Lowers pKa of active site Tyr is lysine 208.

Belongs to the short-chain dehydrogenases/reductases (SDR) family.

It participates in secondary metabolite biosynthesis. Its function is as follows. Short chain dehydrogenase; part of the gene cluster that mediates the biosynthesis of aspercryptins, linear lipopeptides built from six amino acids including 2 highly unusual and nonproteogenic amino acids, 2-amino-octanoic acid (2aoa) and 2-amino-dodecanol (2adol). The core structure of aspercryptins is as follows: Ser/Ala-Thr-Ile/Val-2aoa-Asn-2adol. The first step of aspercryptin biosynthesis is the generation of the fatty acid precursors, octanoic and dodecanoic acids, by the FAS subunits atnF and atnM. The fatty acid precursors are likely transformed into the corresponding alpha-amino fatty acids in three steps. First, they are hydroxylated by the cytochrome P450 monooxygenase atnE, then oxidized to the corresponding alpha-keto acids by the NAD(P)-dependent oxidoreductase atnD, and finally converted to the alpha-amino fatty acids by the PLP-dependent aminotransferases atnH or atnJ. the alpha-amino fatty acids, 2-amino-octanoic and 2-amino-dodecanoic acids, are recognized, activated, and covalently tethered to the NRPS atnA by its fourth and sixth adenylation domains. The second module of atnA is the Thr module and contains an epimerase (E) domain responsible for the epimerization of Thr to D-allo-Thr. Additionally, despite atnA having only one epimerase domain, the first amino acid of aspercryptin A1 is D-Ser, suggesting that serine is either loaded directly as D-Ser on the first module or that the epimerase domain in the threonine module epimerizes both L-Ser and L-Thr. After condensation of the hexapeptide of aspercryptin, the C-terminal reductase (TE) domain might be involved in the reductive release and production of the aldehyde hexapeptide. Further reduction would generate aspercryptins. The variety of aspercryptins produced reflects the flexibility of the atnA NRPS, allowing incorporation of alanine instead of serine, valine for isoleucine, and a C10 fatty amino alcohol instead of the C12 version. AtnB seems to be involved in the selectivity for Ile versus Val by the third module. Moreover, type B, C and D aspercryptins have an additional N-terminal cichorine, acetyl and propionyl group respectively. This is Short chain dehydrogenase atnD from Emericella nidulans (strain FGSC A4 / ATCC 38163 / CBS 112.46 / NRRL 194 / M139) (Aspergillus nidulans).